We begin with the raw amino-acid sequence, 489 residues long: Glutamyl-tRNA(Gln) amidotransferase subunit A (489 aa).

Residues K80 and S160 each act as charge relay system in the active site. The active-site Acyl-ester intermediate is S184.

This sequence belongs to the amidase family. GatA subfamily. As to quaternary structure, heterotrimer of A, B and C subunits.

The catalysed reaction is L-glutamyl-tRNA(Gln) + L-glutamine + ATP + H2O = L-glutaminyl-tRNA(Gln) + L-glutamate + ADP + phosphate + H(+). In terms of biological role, allows the formation of correctly charged Gln-tRNA(Gln) through the transamidation of misacylated Glu-tRNA(Gln) in organisms which lack glutaminyl-tRNA synthetase. The reaction takes place in the presence of glutamine and ATP through an activated gamma-phospho-Glu-tRNA(Gln). This Wolbachia sp. subsp. Brugia malayi (strain TRS) protein is Glutamyl-tRNA(Gln) amidotransferase subunit A.